The following is a 608-amino-acid chain: Albumin (608 aa).

A signal peptide spans 1-18 (MKWVTFLLLLFVSGSAFS). Positions 19 to 24 (RGVFRR) are excised as a propeptide. Albumin domains lie at 19-211 (RGVF…GVKE), 212-403 (KALV…EFQP), and 404-601 (LVEE…NLVT). His-27 contributes to the Cu cation binding site. Ser-29 is subject to Phosphoserine. Residues Glu-30 and Asp-37 each coordinate Ca(2+). Cys-77 and Cys-86 are oxidised to a cystine. Ser-82 and Ser-89 each carry phosphoserine. Position 91 (His-91) interacts with Zn(2+). Intrachain disulfides connect Cys-99–Cys-115, Cys-114–Cys-125, Cys-148–Cys-193, Cys-192–Cys-201, Cys-224–Cys-270, and Cys-269–Cys-277. Lys-229 carries the N6-succinyllysine modification. Glu-268 is a Ca(2+) binding site. Zn(2+) is bound by residues His-271 and Asp-273. 3 residues coordinate Ca(2+): Asp-273, Glu-276, and Asp-279. Cystine bridges form between Cys-289–Cys-303, Cys-302–Cys-313, Cys-340–Cys-385, Cys-384–Cys-393, Cys-416–Cys-462, Cys-461–Cys-472, Cys-485–Cys-501, and Cys-500–Cys-511. A Phosphoserine modification is found at Ser-297. A Phosphoserine modification is found at Ser-443. Residues Thr-444 and Thr-446 each carry the phosphothreonine modification. At Lys-460 the chain carries N6-succinyllysine. Residue Ser-513 is modified to Phosphoserine. Intrachain disulfides connect Cys-538–Cys-583 and Cys-582–Cys-591. Lys-543 bears the N6-succinyllysine mark. Lys-558 is modified (N6-methyllysine). Thr-570 carries the post-translational modification Phosphothreonine. Lys-588 is modified (N6-succinyllysine).

This sequence belongs to the ALB/AFP/VDB family. As to quaternary structure, part of a complex composed of complement component C3, CLCA1/CLCA3, A2ML1/OH and ALB/serum albumin. Interacts with FCGRT; this interaction regulates ALB homeostasis. Interacts with TASOR. In plasma, occurs in a covalently-linked complex with chromophore-bound alpha-1-microglobulin; this interaction does not prevent fatty acid binding to ALB. Post-translationally, phosphorylated by FAM20C in the extracellular medium. In terms of tissue distribution, plasma. Expressed in the granular cells within the cerebellum.

It localises to the secreted. In terms of biological role, binds water, Ca(2+), Na(+), K(+), fatty acids, hormones, bilirubin and drugs. Its main function is the regulation of the colloidal osmotic pressure of blood. Major zinc transporter in plasma, typically binds about 80% of all plasma zinc. Major calcium and magnesium transporter in plasma, binds approximately 45% of circulating calcium and magnesium in plasma. Potentially has more than two calcium-binding sites and might additionally bind calcium in a non-specific manner. The shared binding site between zinc and calcium at residue Asp-273 suggests a crosstalk between zinc and calcium transport in the blood. The rank order of affinity is zinc &gt; calcium &gt; magnesium. Binds to the bacterial siderophore enterobactin and inhibits enterobactin-mediated iron uptake of E.coli from ferric transferrin, and may thereby limit the utilization of iron and growth of enteric bacteria such as E.coli. Does not prevent iron uptake by the bacterial siderophore aerobactin. The polypeptide is Albumin (Alb) (Mus musculus (Mouse)).